A 477-amino-acid polypeptide reads, in one-letter code: Sulfate adenylyltransferase subunit 1 (477 aa).

Residues 22 to 239 (KDMLRFITCG…TVQISHDAPL (218 aa)) form the tr-type G domain. A G1 region spans residues 31 to 38 (GSVDDGKS). Residue 31–38 (GSVDDGKS) coordinates GTP. The interval 89-93 (GITID) is G2. The G3 stretch occupies residues 110-113 (DCPG). GTP is bound by residues 110–114 (DCPGH) and 165–168 (NKMD). Residues 165 to 168 (NKMD) form a G4 region. Positions 202–204 (SAL) are G5.

It belongs to the TRAFAC class translation factor GTPase superfamily. Classic translation factor GTPase family. CysN/NodQ subfamily. In terms of assembly, heterodimer composed of CysD, the smaller subunit, and CysN.

The enzyme catalyses sulfate + ATP + H(+) = adenosine 5'-phosphosulfate + diphosphate. It participates in sulfur metabolism; hydrogen sulfide biosynthesis; sulfite from sulfate: step 1/3. Functionally, with CysD forms the ATP sulfurylase (ATPS) that catalyzes the adenylation of sulfate producing adenosine 5'-phosphosulfate (APS) and diphosphate, the first enzymatic step in sulfur assimilation pathway. APS synthesis involves the formation of a high-energy phosphoric-sulfuric acid anhydride bond driven by GTP hydrolysis by CysN coupled to ATP hydrolysis by CysD. This chain is Sulfate adenylyltransferase subunit 1, found in Chromobacterium violaceum (strain ATCC 12472 / DSM 30191 / JCM 1249 / CCUG 213 / NBRC 12614 / NCIMB 9131 / NCTC 9757 / MK).